Reading from the N-terminus, the 55-residue chain is Lantibiotic epilancin 15X (55 aa).

Positions 1 to 24 are cleaved as a propeptide — cleaved by ElxP; it reads MKKELFDLNLNKDIEAQKSDLNPQ. At Ser25 the chain carries D-lactate; by the dehydratase ElxB and the dehydrogenase ElxO. Position 27 is a 2,3-didehydroalanine (Ser); by the dehydratase ElxB (Ser27). Residues Thr31 and Thr32 each carry the 2,3-didehydrobutyrine; by the dehydratase ElxB modification. The lanthionine (Ser-Cys); by the dehydratase ElxB and the cyclase ElxC cross-link spans 36-40; the sequence is SKKLC. 2 cross-links (beta-methyllanthionine (Thr-Cys); by the dehydratase ElxB and the cyclase ElxC) span residues 44–47 and 46–49; these read TLTC and TCGC. 2,3-didehydrobutyrine; by the dehydratase ElxB is present on Thr52.

In terms of processing, maturation of this lantibiotic involves the enzymatic conversion of Thr, and Ser into dehydrated AA by ElxB and the formation of thioether bonds with cysteine by the cyclase ElxC. The next steps are cleavage of the leader peptide by ElxP and membrane translocation by ElxT. The leader peptide may be removed before membrane translocation, in contrast to other lantibiotics for which the cleavage occur after translocation. This is suggested by the probable cytoplasmic localization of the serine protease ElxP that cleaves the leader peptide. The N-terminal D-lactate is probably produced by dehydration of Ser-25 by ElxB, followed by proteolytic removal of the leader peptide by the serine protease ElxP and hydrolysis of the resulting new N-terminal dehydroalanine. This hydrolysis may occur spontaneously. The pyruvate group thus formed is reduced to D-lactate by the NADPH-dependent oxidoreductase ElxO. This N-terminal D-lactate protects the lantibiotic against degradation against aminopeptidase. Post-translationally, it is not established whether the 2,3-didehydrobutyrines are the E- or Z-isomers.

Its function is as follows. Lanthionine-containing peptide antibiotic (lantibiotic) active on Gram-positive bacteria such as staphylococci, enterococci and streptococci. The bactericidal activity of lantibiotics is based on depolarization of energized bacterial cytoplasmic membranes, initiated by the formation of aqueous transmembrane pores. The polypeptide is Lantibiotic epilancin 15X (Staphylococcus epidermidis).